The sequence spans 309 residues: Olfactory receptor 8U1 (309 aa).

Residues 1-25 lie on the Extracellular side of the membrane; it reads MAHINCTQATEFILVGLTDHQELKM. N5 carries an N-linked (GlcNAc...) asparagine glycan. A helical transmembrane segment spans residues 26–46; it reads PLFVLFLSIYLFTVVGNLGLI. At 47–54 the chain is on the cytoplasmic side; sequence LLIRADTS. A helical transmembrane segment spans residues 55–75; the sequence is LNTPMYFFLSNLAFVDFCYSS. Over 76–99 the chain is Extracellular; it reads VITPKMLGNFLYKQNVISFDACAT. The cysteines at positions 97 and 189 are disulfide-linked. Residues 100-120 traverse the membrane as a helical segment; the sequence is QLGCFLTFMISESLLLASMAY. Topologically, residues 121 to 139 are cytoplasmic; it reads DRYVAICNPLLYMVVMTPG. A helical membrane pass occupies residues 140-160; that stretch reads ICIQLVAVPYSYSFLMALFHT. Topologically, residues 161–197 are extracellular; sequence ILTFRLSYCHSNIVNHFYCDDMPLLRLTCSDTRFKQL. A helical membrane pass occupies residues 198 to 217; the sequence is WIFACAGIMFISSLLIVFVS. Residues 218–237 are Cytoplasmic-facing; sequence YMFIISAILRMHSAEGRQKA. The chain crosses the membrane as a helical span at residues 238–258; it reads FSTCGSHMLAVTIFYGTLIFM. The Extracellular segment spans residues 259 to 271; that stretch reads YLQPSSSHALDTD. A helical transmembrane segment spans residues 272–292; that stretch reads KMASVFYTVIIPMLNPLIYSL. At 293–309 the chain is on the cytoplasmic side; sequence QNKEVKEALKKIIINKN.

The protein belongs to the G-protein coupled receptor 1 family.

The protein localises to the cell membrane. Functionally, odorant receptor. This chain is Olfactory receptor 8U1 (OR8U1), found in Homo sapiens (Human).